The following is a 599-amino-acid chain: Elongation factor 4 (599 aa).

Positions 5–187 (SKIRNFSIVA…AIVKRLPAPT (183 aa)) constitute a tr-type G domain. GTP contacts are provided by residues 17–22 (DHGKST) and 134–137 (NKID).

It belongs to the TRAFAC class translation factor GTPase superfamily. Classic translation factor GTPase family. LepA subfamily.

It localises to the cell inner membrane. The enzyme catalyses GTP + H2O = GDP + phosphate + H(+). Required for accurate and efficient protein synthesis under certain stress conditions. May act as a fidelity factor of the translation reaction, by catalyzing a one-codon backward translocation of tRNAs on improperly translocated ribosomes. Back-translocation proceeds from a post-translocation (POST) complex to a pre-translocation (PRE) complex, thus giving elongation factor G a second chance to translocate the tRNAs correctly. Binds to ribosomes in a GTP-dependent manner. The chain is Elongation factor 4 from Ruegeria sp. (strain TM1040) (Silicibacter sp.).